Here is a 108-residue protein sequence, read N- to C-terminus: DNA-directed RNA polymerase III subunit RPC10 (108 aa).

Residues Cys5, Cys8, Cys25, Cys28, Cys69, and Cys72 each contribute to the Zn(2+) site. The C4-type zinc-finger motif lies at 5–28; that stretch reads CPGCGNGLIVEEGQRCHRFACNTC. The TFIIS-type zinc-finger motif lies at 65-107; the sequence is TAEPCPKCEHPRAYFMQLQTRSADEPMTTFYKCCNAQCGHRWR. Residues 88–89 carry the Hairpin motif; that stretch reads DE. Zn(2+) is bound by residues Cys98 and Cys102.

It belongs to the archaeal RpoM/eukaryotic RPA12/RPB9/RPC11 RNA polymerase family. As to quaternary structure, component of the RNA polymerase III complex consisting of 17 subunits: a ten-subunit horseshoe-shaped catalytic core composed of POLR3A/RPC1, POLR3B/RPC2, POLR1C/RPAC1, POLR1D/RPAC2, POLR3K/RPC10, POLR2E/RPABC1, POLR2F/RPABC2, POLR2H/RPABC3, POLR2K/RPABC4 and POLR2L/RPABC5; a mobile stalk composed of two subunits POLR3H/RPC8 and CRCP/RPC9, protruding from the core and functioning primarily in transcription initiation; and additional subunits homologous to general transcription factors of the RNA polymerase II machinery, POLR3C/RPC3-POLR3F/RPC6-POLR3G/RPC7 heterotrimer required for transcription initiation and POLR3D/RPC4-POLR3E/RPC5 heterodimer involved in both transcription initiation and termination.

Its subcellular location is the nucleus. In terms of biological role, core component of RNA polymerase III (Pol III) which synthesizes small non-coding RNAs using the four ribonucleoside triphosphates as substrates. Can mediate Pol I proofreading of the nascent RNA transcript. Anchors into the Pol III active site to constantly monitor transcription fidelity, cleaves mis-incorporated 5'-ribonucleotides and restarts the transcription process. Once Pol III reaches the poly(dT) termination signal, can induce Pol III clamp opening and transcription termination. Pol III plays an important role in sensing and limiting infection by intracellular bacteria and DNA viruses. Acts as a nuclear and cytosolic DNA sensor involved in innate immune response. Can sense non-self dsDNA that serves as template for transcription into dsRNA. The non-self RNA polymerase III transcripts, such as Epstein-Barr virus-encoded RNAs (EBERs) induce type I interferon and NF-kappa-B through the RIG-I pathway. This chain is DNA-directed RNA polymerase III subunit RPC10, found in Mus musculus (Mouse).